Reading from the N-terminus, the 64-residue chain is Alpha-like toxin Lqh6 (64 aa).

The region spanning 2–63 (RDGYIAQPEN…GIIVDGVKCH (62 aa)) is the LCN-type CS-alpha/beta domain. Cystine bridges form between cysteine 12–cysteine 62, cysteine 16–cysteine 34, cysteine 20–cysteine 44, and cysteine 24–cysteine 46. Lysine 64 is modified (lysine amide).

Belongs to the long (4 C-C) scorpion toxin superfamily. Sodium channel inhibitor family. Alpha subfamily. Expressed by the venom gland.

It is found in the secreted. Functionally, alpha toxins bind voltage-independently at site-3 of sodium channels (Nav) and inhibit the inactivation of the activated channels, thereby blocking neuronal transmission. This toxin is highly toxic to insects and mice, and inhibits the binding of alpha-toxin to cockroach neuronal membranes. The chain is Alpha-like toxin Lqh6 from Leiurus hebraeus (Hebrew deathstalker scorpion).